The primary structure comprises 88 residues: Small ribosomal subunit protein bS16c (88 aa).

Belongs to the bacterial ribosomal protein bS16 family.

The protein localises to the plastid. Its subcellular location is the chloroplast. This chain is Small ribosomal subunit protein bS16c, found in Sinapis alba (White mustard).